Consider the following 208-residue polypeptide: MTKGILGKKVGMTQIFTESGEFIPVTVIEATPNVVLQVKTVETDGYEAVQVGFDDKREVLSNKPAKGHVAKANTAPKRFIREFKNIEGLEVGAELSVEQFEAGDVVDVTGTSKGKGFQGVIKRHGQSRGPMAHGSRYHRRPGSMGPVAPNRVFKNKRLAGRMGGNRVTVQNLEIVQVIPEKNVVLIKGNVPGAKKSLITIKSAVKAAK.

Residues 116-148 form a disordered region; sequence GFQGVIKRHGQSRGPMAHGSRYHRRPGSMGPVA.

The protein belongs to the universal ribosomal protein uL3 family. In terms of assembly, part of the 50S ribosomal subunit. Forms a cluster with proteins L14 and L19.

One of the primary rRNA binding proteins, it binds directly near the 3'-end of the 23S rRNA, where it nucleates assembly of the 50S subunit. The chain is Large ribosomal subunit protein uL3 from Streptococcus agalactiae serotype Ia (strain ATCC 27591 / A909 / CDC SS700).